The primary structure comprises 992 residues: UPF0182 protein Mb3215c (992 aa).

The next 7 membrane-spanning stretches (helical) occupy residues 17-39 (RILI…LIDA), 59-81 (LATR…FGGL), 113-135 (LVGI…SYWA), 169-191 (LMLS…AHYI), 212-229 (LVSL…AYWL), 255-277 (VLPA…FSAI), and 284-306 (IPAI…WPLI). The disordered stretch occupies residues 906 to 938 (PTEAAVPPSPAANPPPPASGPQPPPVTAAPPVP). A compositionally biased stretch (pro residues) spans 912–938 (PPSPAANPPPPASGPQPPPVTAAPPVP).

Belongs to the UPF0182 family.

The protein resides in the cell membrane. The polypeptide is UPF0182 protein Mb3215c (Mycobacterium bovis (strain ATCC BAA-935 / AF2122/97)).